A 499-amino-acid polypeptide reads, in one-letter code: 2,3-bisphosphoglycerate-independent phosphoglycerate mutase (499 aa).

Residues D10 and S60 each contribute to the Mn(2+) site. The Phosphoserine intermediate role is filled by S60. Substrate-binding positions include H121, 151 to 152, R182, R188, 253 to 256, and K326; these read RD and RPDR. Mn(2+) contacts are provided by D391, H395, D434, H435, and H452.

This sequence belongs to the BPG-independent phosphoglycerate mutase family. Monomer. Requires Mn(2+) as cofactor.

It carries out the reaction (2R)-2-phosphoglycerate = (2R)-3-phosphoglycerate. It participates in carbohydrate degradation; glycolysis; pyruvate from D-glyceraldehyde 3-phosphate: step 3/5. Its function is as follows. Catalyzes the interconversion of 2-phosphoglycerate and 3-phosphoglycerate. The protein is 2,3-bisphosphoglycerate-independent phosphoglycerate mutase of Metamycoplasma hominis (strain ATCC 23114 / DSM 25592 / NBRC 14850 / NCTC 10111 / PG21) (Mycoplasma hominis).